Consider the following 338-residue polypeptide: Mitochondrial amidoxime reducing component 2 (338 aa).

The transit peptide at 1-35 (MGSSSSTALARLGLPGQPRSTWLGVAALGLAAVAL) directs the protein to the mitochondrion. Residues Lys59, Lys138, and Lys144 each participate in a glycyl lysine isopeptide (Lys-Gly) (interchain with G-Cter in ubiquitin) cross-link. Lys156 carries the N6-acetyllysine; alternate modification. A Glycyl lysine isopeptide (Lys-Gly) (interchain with G-Cter in ubiquitin); alternate cross-link involves residue Lys156. Residues Lys173, Lys187, Lys289, and Lys296 each participate in a glycyl lysine isopeptide (Lys-Gly) (interchain with G-Cter in ubiquitin) cross-link. Residues 188 to 336 (GRTTKKLYPS…LRVGDPVYRM (149 aa)) enclose the MOSC domain.

Component of a complex composed of cytochrome b5, NADH-cytochrome b5 reductase (CYB5R3) and MTARC2. It depends on Mo-molybdopterin as a cofactor. Ubiquitinated by PRKN during mitophagy, leading to its degradation and enhancement of mitophagy. Deubiquitinated by USP30.

Its subcellular location is the mitochondrion outer membrane. It is found in the peroxisome. The catalysed reaction is N(omega)-hydroxy-L-arginine + 2 Fe(II)-[cytochrome b5] + 2 H(+) = L-arginine + 2 Fe(III)-[cytochrome b5] + H2O. Catalyzes the reduction of N-oxygenated molecules, acting as a counterpart of cytochrome P450 and flavin-containing monooxygenases in metabolic cycles. As a component of prodrug-converting system, reduces a multitude of N-hydroxylated prodrugs particularly amidoximes, leading to increased drug bioavailability. May be involved in mitochondrial N(omega)-hydroxy-L-arginine (NOHA) reduction, regulating endogenous nitric oxide levels and biosynthesis. Postulated to cleave the N-OH bond of N-hydroxylated substrates in concert with electron transfer from NADH to cytochrome b5 reductase then to cytochrome b5, the ultimate electron donor that primes the active site for substrate reduction. This is Mitochondrial amidoxime reducing component 2 (Mtarc2) from Rattus norvegicus (Rat).